We begin with the raw amino-acid sequence, 39 residues long: Potassium channel toxin alpha-KTx 2.17 (39 aa).

Cystine bridges form between cysteine 7–cysteine 29, cysteine 13–cysteine 34, and cysteine 17–cysteine 36. Isoleucine 39 bears the Isoleucine amide mark.

Belongs to the short scorpion toxin superfamily. Potassium channel inhibitor family. Alpha-KTx 02 subfamily. Expressed by the venom gland.

Its subcellular location is the secreted. In terms of biological role, blocks human voltage-gated potassium channels Kv1.1/KCNA1 (IC(50)=4.8 nM) and Kv1.2/KCNA2 (IC(50)=2.9 nM). This is Potassium channel toxin alpha-KTx 2.17 from Centruroides tecomanus (Scorpion).